The following is a 414-amino-acid chain: 3-phosphoshikimate 1-carboxyvinyltransferase (414 aa).

Lys-20, Ser-21, and Arg-25 together coordinate 3-phosphoshikimate. Residue Lys-20 participates in phosphoenolpyruvate binding. Phosphoenolpyruvate-binding residues include Gly-88 and Arg-116. Residues Thr-157, Ser-158, Gln-159, Ser-183, Asp-297, and Lys-324 each coordinate 3-phosphoshikimate. A phosphoenolpyruvate-binding site is contributed by Gln-159. Residue Asp-297 is the Proton acceptor of the active site. Residues Arg-328, Arg-369, and Lys-395 each coordinate phosphoenolpyruvate.

It belongs to the EPSP synthase family. As to quaternary structure, monomer.

It is found in the cytoplasm. The enzyme catalyses 3-phosphoshikimate + phosphoenolpyruvate = 5-O-(1-carboxyvinyl)-3-phosphoshikimate + phosphate. Its pathway is metabolic intermediate biosynthesis; chorismate biosynthesis. Functionally, catalyzes the transfer of the enolpyruvyl moiety of phosphoenolpyruvate (PEP) to the 5-hydroxyl of shikimate-3-phosphate (S3P) to produce enolpyruvyl shikimate-3-phosphate and inorganic phosphate. This chain is 3-phosphoshikimate 1-carboxyvinyltransferase, found in Caldivirga maquilingensis (strain ATCC 700844 / DSM 13496 / JCM 10307 / IC-167).